The following is a 195-amino-acid chain: MFVPYVIERTSRGERSYDIYSRLLKDRIVMLSGEINDEVASSVVAQLLFLEAEDPDKDIYLYINSPGGVVTSGFSIYDTMNYIKPAVSTICIGQAASMGAFLLSCGEKGKRYALPNARIMIHQPLGGAQGQATDIEITTKEILRIKATLNKILAENSGQKLSKIEKDTDRDFYMSAQEAVKYGLIDKVLEKSLTE.

The Nucleophile role is filled by Ser-97. Residue His-122 is part of the active site.

This sequence belongs to the peptidase S14 family. Fourteen ClpP subunits assemble into 2 heptameric rings which stack back to back to give a disk-like structure with a central cavity, resembling the structure of eukaryotic proteasomes.

It is found in the cytoplasm. The catalysed reaction is Hydrolysis of proteins to small peptides in the presence of ATP and magnesium. alpha-casein is the usual test substrate. In the absence of ATP, only oligopeptides shorter than five residues are hydrolyzed (such as succinyl-Leu-Tyr-|-NHMec, and Leu-Tyr-Leu-|-Tyr-Trp, in which cleavage of the -Tyr-|-Leu- and -Tyr-|-Trp bonds also occurs).. Cleaves peptides in various proteins in a process that requires ATP hydrolysis. Has a chymotrypsin-like activity. Plays a major role in the degradation of misfolded proteins. The chain is ATP-dependent Clp protease proteolytic subunit from Campylobacter hominis (strain ATCC BAA-381 / DSM 21671 / CCUG 45161 / LMG 19568 / NCTC 13146 / CH001A).